The primary structure comprises 883 residues: Alanine--tRNA ligase (883 aa).

4 residues coordinate Zn(2+): histidine 560, histidine 564, cysteine 665, and histidine 669.

Belongs to the class-II aminoacyl-tRNA synthetase family. The cofactor is Zn(2+).

It localises to the cytoplasm. It carries out the reaction tRNA(Ala) + L-alanine + ATP = L-alanyl-tRNA(Ala) + AMP + diphosphate. In terms of biological role, catalyzes the attachment of alanine to tRNA(Ala) in a two-step reaction: alanine is first activated by ATP to form Ala-AMP and then transferred to the acceptor end of tRNA(Ala). Also edits incorrectly charged Ser-tRNA(Ala) and Gly-tRNA(Ala) via its editing domain. This is Alanine--tRNA ligase from Mesomycoplasma hyopneumoniae (strain J / ATCC 25934 / NCTC 10110) (Mycoplasma hyopneumoniae).